Here is a 146-residue protein sequence, read N- to C-terminus: MSLTLRVTTPLAAVLEEEGLASIRAEDASGGFGLLPGHVDLLTVIEAGVLRFRRPEGPWHFCAIRGGVLRATGGRLVTVACREAVPGEDLARLEAGLKRQAEAADQAARRARGEQVRLHANAIRSLMRHLDRAPGADLSGIVEAFE.

The protein belongs to the ATPase epsilon chain family. F-type ATPases have 2 components, CF(1) - the catalytic core - and CF(0) - the membrane proton channel. CF(1) has five subunits: alpha(3), beta(3), gamma(1), delta(1), epsilon(1). CF(0) has three main subunits: a, b and c.

Its subcellular location is the cell inner membrane. Functionally, produces ATP from ADP in the presence of a proton gradient across the membrane. This is ATP synthase epsilon chain 2 from Cereibacter sphaeroides (strain ATCC 17023 / DSM 158 / JCM 6121 / CCUG 31486 / LMG 2827 / NBRC 12203 / NCIMB 8253 / ATH 2.4.1.) (Rhodobacter sphaeroides).